An 829-amino-acid polypeptide reads, in one-letter code: Transcription activator GutR (829 aa).

A DNA-binding region (H-T-H motif) is located at residues 42 to 61; the sequence is IDKIALQLGVSPNTIKSWIG. 200–207 is a binding site for ATP; it reads GWAGMGKT. TPR repeat units lie at residues 697–730, 736–769, and 775–808; these read HRVLLVRGDLSFARGYHVEAIQLYEAANEISSTY, IEAYFNLGVAYVKCDQFEKAEEAFEQMLYDKHNA, and IYYHYGMAQLLYRKGEKTKAVESNQKAIRLIDSW.

Functionally, activator of the glucitol dehydrogenase gene (gutB). This Bacillus subtilis (strain 168) protein is Transcription activator GutR (gutR).